We begin with the raw amino-acid sequence, 370 residues long: Probable aspartic-type endopeptidase ARB_04018 (370 aa).

The signal sequence occupies residues Met1–Leu21. Residues Asn80 and Asn102 are each glycosylated (N-linked (GlcNAc...) asparagine). A Peptidase A1 domain is found at Phe94 to Ala367. Residue Asp110 is part of the active site. Residue Asn251 is glycosylated (N-linked (GlcNAc...) asparagine). Asp261 is a catalytic residue. The N-linked (GlcNAc...) asparagine glycan is linked to Asn298.

The protein belongs to the peptidase A1 family.

The protein localises to the secreted. Functionally, probable aspartic-type endopeptidase which contributes to virulence. The polypeptide is Probable aspartic-type endopeptidase ARB_04018 (Arthroderma benhamiae (strain ATCC MYA-4681 / CBS 112371) (Trichophyton mentagrophytes)).